The primary structure comprises 629 residues: MPELRSRTVTHGRNMAGARALMRASGVPAADIGAKPVVAVANSFTEFVPGHTHLQPVGRIVGDAIRRAGGIPREFNTIAVDDGIAMGHQGMLYSLPSRDLIADSIEYMVQAHCADALVCISNCDKITPGMLLAAMRLDIPTVFVSGGPMEGGRATLADGTVRRLDLITAMSEAVNDATSDADLATIEENACPTCGSCAGMFTANSMNCLVEALGLALPGNGTTLATHTARRDLYEAAGATIMAITRRYYDRDDATVLPRAIASRAAFDNAMALDLAMGGSTNTVLHLLAAAHEAGLDYTLADIEKRSRAVPCLCKVAPNGSHLMEDVHRAGGIPAILGELRRGGHLHTTVRAVHSESLDGWLAEWDVRGPNPAQAAVDLFHAAPGGVRSATAFSQSARWAALDLDAESGCIRDVAHAYSEDGGLAVLRGNLAVDGAVVKSAGVPADLHVFTGEAVVAESQEEAVTAVLSGRVRPGTVLVIRYEGPRGGPGMQEMLYPTAYLKGRGLAGSVAVVTDGRFSGGSSGLSIGHVSPEAAAGGTIAAVTDGDPITIDIPSRTLRLEVDDAEIARRLAHRRRTGYRPRSRHRPLSTALRAYALLAQSADKGGVRRLPPDELGGPEAAFDTQTRAG.

A Mg(2+)-binding site is contributed by aspartate 82. Cysteine 123 contacts [2Fe-2S] cluster. Residues aspartate 124 and lysine 125 each contribute to the Mg(2+) site. Lysine 125 carries the N6-carboxylysine modification. Cysteine 197 is a binding site for [2Fe-2S] cluster. Glutamate 493 lines the Mg(2+) pocket. Residue serine 519 is the Proton acceptor of the active site. The disordered stretch occupies residues 603–629 (DKGGVRRLPPDELGGPEAAFDTQTRAG).

It belongs to the IlvD/Edd family. Homodimer. [2Fe-2S] cluster serves as cofactor. The cofactor is Mg(2+).

The enzyme catalyses (2R)-2,3-dihydroxy-3-methylbutanoate = 3-methyl-2-oxobutanoate + H2O. The catalysed reaction is (2R,3R)-2,3-dihydroxy-3-methylpentanoate = (S)-3-methyl-2-oxopentanoate + H2O. It participates in amino-acid biosynthesis; L-isoleucine biosynthesis; L-isoleucine from 2-oxobutanoate: step 3/4. Its pathway is amino-acid biosynthesis; L-valine biosynthesis; L-valine from pyruvate: step 3/4. In terms of biological role, functions in the biosynthesis of branched-chain amino acids. Catalyzes the dehydration of (2R,3R)-2,3-dihydroxy-3-methylpentanoate (2,3-dihydroxy-3-methylvalerate) into 2-oxo-3-methylpentanoate (2-oxo-3-methylvalerate) and of (2R)-2,3-dihydroxy-3-methylbutanoate (2,3-dihydroxyisovalerate) into 2-oxo-3-methylbutanoate (2-oxoisovalerate), the penultimate precursor to L-isoleucine and L-valine, respectively. The chain is Dihydroxy-acid dehydratase 2 from Nocardia farcinica (strain IFM 10152).